The chain runs to 380 residues: tRNA-specific 2-thiouridylase MnmA (380 aa).

ATP contacts are provided by residues 6-13 and methionine 32; that span reads ALSGGVDS. The active-site Nucleophile is the cysteine 101. A disulfide bridge connects residues cysteine 101 and cysteine 199. Position 125 (glycine 125) interacts with ATP. The segment at 148–150 is interaction with tRNA; that stretch reads KDQ. The Cysteine persulfide intermediate role is filled by cysteine 199.

This sequence belongs to the MnmA/TRMU family.

It is found in the cytoplasm. It carries out the reaction S-sulfanyl-L-cysteinyl-[protein] + uridine(34) in tRNA + AH2 + ATP = 2-thiouridine(34) in tRNA + L-cysteinyl-[protein] + A + AMP + diphosphate + H(+). Its function is as follows. Catalyzes the 2-thiolation of uridine at the wobble position (U34) of tRNA, leading to the formation of s(2)U34. This chain is tRNA-specific 2-thiouridylase MnmA, found in Beutenbergia cavernae (strain ATCC BAA-8 / DSM 12333 / CCUG 43141 / JCM 11478 / NBRC 16432 / NCIMB 13614 / HKI 0122).